We begin with the raw amino-acid sequence, 500 residues long: NAD(P)H-quinone oxidoreductase chain 4, chloroplastic (500 aa).

Transmembrane regions (helical) follow at residues 4-24 (FPWL…IFFL), 37-57 (IGIC…FFQL), 87-107 (IGPI…AWPV), 113-130 (LFHF…GLFS), 134-154 (LLLF…LLSM), 167-187 (FILY…GMGL), 208-228 (ALEI…LPII), 242-262 (HYST…YGLI), 272-292 (AHSI…IYAA), 305-325 (IAYS…SITD), 330-350 (GAVL…FLAG), 386-406 (LALP…GIIT), 416-436 (VLIT…SLSM), and 462-482 (LFIS…PDFV).

This sequence belongs to the complex I subunit 4 family.

The protein resides in the plastid. It is found in the chloroplast thylakoid membrane. The enzyme catalyses a plastoquinone + NADH + (n+1) H(+)(in) = a plastoquinol + NAD(+) + n H(+)(out). It carries out the reaction a plastoquinone + NADPH + (n+1) H(+)(in) = a plastoquinol + NADP(+) + n H(+)(out). The polypeptide is NAD(P)H-quinone oxidoreductase chain 4, chloroplastic (Ceratophyllum demersum (Rigid hornwort)).